Here is a 209-residue protein sequence, read N- to C-terminus: Large ribosomal subunit protein uL3 (209 aa).

This sequence belongs to the universal ribosomal protein uL3 family. In terms of assembly, part of the 50S ribosomal subunit. Forms a cluster with proteins L14 and L19.

Functionally, one of the primary rRNA binding proteins, it binds directly near the 3'-end of the 23S rRNA, where it nucleates assembly of the 50S subunit. The polypeptide is Large ribosomal subunit protein uL3 (Brevibacillus brevis (strain 47 / JCM 6285 / NBRC 100599)).